A 254-amino-acid polypeptide reads, in one-letter code: Imidazole glycerol phosphate synthase subunit HisF (254 aa).

Active-site residues include Asp11 and Asp130.

This sequence belongs to the HisA/HisF family. Heterodimer of HisH and HisF.

Its subcellular location is the cytoplasm. The catalysed reaction is 5-[(5-phospho-1-deoxy-D-ribulos-1-ylimino)methylamino]-1-(5-phospho-beta-D-ribosyl)imidazole-4-carboxamide + L-glutamine = D-erythro-1-(imidazol-4-yl)glycerol 3-phosphate + 5-amino-1-(5-phospho-beta-D-ribosyl)imidazole-4-carboxamide + L-glutamate + H(+). It participates in amino-acid biosynthesis; L-histidine biosynthesis; L-histidine from 5-phospho-alpha-D-ribose 1-diphosphate: step 5/9. Functionally, IGPS catalyzes the conversion of PRFAR and glutamine to IGP, AICAR and glutamate. The HisF subunit catalyzes the cyclization activity that produces IGP and AICAR from PRFAR using the ammonia provided by the HisH subunit. This is Imidazole glycerol phosphate synthase subunit HisF from Laribacter hongkongensis (strain HLHK9).